The primary structure comprises 132 residues: uncharacterized protein (132 aa).

The region spanning 1–69 (MNIGEAAKKS…LDEVGKLLTL (69 aa)) is the HTH merR-type domain. A DNA-binding region (H-T-H motif) is located at residues 4–23 (GEAAKKSGLTPKMIRYYESI).

Its subcellular location is the cytoplasm. This is an uncharacterized protein from Pseudomonas aeruginosa (strain ATCC 15692 / DSM 22644 / CIP 104116 / JCM 14847 / LMG 12228 / 1C / PRS 101 / PAO1).